Here is a 169-residue protein sequence, read N- to C-terminus: Ribosome maturation factor RimP (169 aa).

This sequence belongs to the RimP family.

It localises to the cytoplasm. Its function is as follows. Required for maturation of 30S ribosomal subunits. This chain is Ribosome maturation factor RimP, found in Pseudomonas putida (strain W619).